Here is a 37-residue protein sequence, read N- to C-terminus: MKVKPSVKRICNKCRVIRRHGRVMVICTDPRHKQRQG.

Belongs to the bacterial ribosomal protein bL36 family.

The protein is Large ribosomal subunit protein bL36 of Salinispora arenicola (strain CNS-205).